A 386-amino-acid polypeptide reads, in one-letter code: Probable Xaa-Pro aminopeptidase PMAA_074180 (386 aa).

Mn(2+)-binding residues include Asp-160, Asp-171, Glu-311, and Glu-350.

The protein belongs to the peptidase M24B family. It depends on Mn(2+) as a cofactor.

The catalysed reaction is Release of any N-terminal amino acid, including proline, that is linked to proline, even from a dipeptide or tripeptide.. Catalyzes the removal of a penultimate prolyl residue from the N-termini of peptides. This chain is Probable Xaa-Pro aminopeptidase PMAA_074180, found in Talaromyces marneffei (strain ATCC 18224 / CBS 334.59 / QM 7333) (Penicillium marneffei).